Reading from the N-terminus, the 95-residue chain is Co-chaperonin GroES (95 aa).

The protein belongs to the GroES chaperonin family. As to quaternary structure, heptamer of 7 subunits arranged in a ring. Interacts with the chaperonin GroEL.

It is found in the cytoplasm. In terms of biological role, together with the chaperonin GroEL, plays an essential role in assisting protein folding. The GroEL-GroES system forms a nano-cage that allows encapsulation of the non-native substrate proteins and provides a physical environment optimized to promote and accelerate protein folding. GroES binds to the apical surface of the GroEL ring, thereby capping the opening of the GroEL channel. The sequence is that of Co-chaperonin GroES from Maricaulis maris (strain MCS10) (Caulobacter maris).